Here is a 412-residue protein sequence, read N- to C-terminus: Arginine biosynthesis bifunctional protein ArgJ (412 aa).

Substrate contacts are provided by threonine 155, lysine 181, threonine 192, glutamate 279, asparagine 407, and serine 412. Threonine 192 serves as the catalytic Nucleophile.

This sequence belongs to the ArgJ family. As to quaternary structure, heterotetramer of two alpha and two beta chains.

It is found in the cytoplasm. The catalysed reaction is N(2)-acetyl-L-ornithine + L-glutamate = N-acetyl-L-glutamate + L-ornithine. It catalyses the reaction L-glutamate + acetyl-CoA = N-acetyl-L-glutamate + CoA + H(+). Its pathway is amino-acid biosynthesis; L-arginine biosynthesis; L-ornithine and N-acetyl-L-glutamate from L-glutamate and N(2)-acetyl-L-ornithine (cyclic): step 1/1. It participates in amino-acid biosynthesis; L-arginine biosynthesis; N(2)-acetyl-L-ornithine from L-glutamate: step 1/4. In terms of biological role, catalyzes two activities which are involved in the cyclic version of arginine biosynthesis: the synthesis of N-acetylglutamate from glutamate and acetyl-CoA as the acetyl donor, and of ornithine by transacetylation between N(2)-acetylornithine and glutamate. The protein is Arginine biosynthesis bifunctional protein ArgJ of Aromatoleum aromaticum (strain DSM 19018 / LMG 30748 / EbN1) (Azoarcus sp. (strain EbN1)).